Consider the following 387-residue polypeptide: 3-ketoacyl-CoA thiolase (387 aa).

The active-site Acyl-thioester intermediate is cysteine 91. Catalysis depends on proton acceptor residues histidine 343 and cysteine 373.

The protein belongs to the thiolase-like superfamily. Thiolase family. Heterotetramer of two alpha chains (FadB) and two beta chains (FadA).

Its subcellular location is the cytoplasm. The catalysed reaction is an acyl-CoA + acetyl-CoA = a 3-oxoacyl-CoA + CoA. It participates in lipid metabolism; fatty acid beta-oxidation. Catalyzes the final step of fatty acid oxidation in which acetyl-CoA is released and the CoA ester of a fatty acid two carbons shorter is formed. The protein is 3-ketoacyl-CoA thiolase of Escherichia coli O6:K15:H31 (strain 536 / UPEC).